Reading from the N-terminus, the 364-residue chain is Fructose-1,6-bisphosphatase class 1 1 (364 aa).

The Mg(2+) site is built by glutamate 99, aspartate 121, leucine 123, and aspartate 124. Substrate contacts are provided by residues 124 to 127 and asparagine 220; that span reads DGSS. Glutamate 292 contacts Mg(2+).

The protein belongs to the FBPase class 1 family. In terms of assembly, homotetramer. Mg(2+) is required as a cofactor.

It is found in the cytoplasm. It catalyses the reaction beta-D-fructose 1,6-bisphosphate + H2O = beta-D-fructose 6-phosphate + phosphate. It participates in carbohydrate biosynthesis; gluconeogenesis. The sequence is that of Fructose-1,6-bisphosphatase class 1 1 from Albidiferax ferrireducens (strain ATCC BAA-621 / DSM 15236 / T118) (Rhodoferax ferrireducens).